Here is a 490-residue protein sequence, read N- to C-terminus: Protein nucleotidyltransferase YdiU (490 aa).

Residues G89, G91, R92, K112, D124, G125, R175, and R182 each coordinate ATP. The active-site Proton acceptor is the D251. The Mg(2+) site is built by N252 and D261. Residue D261 coordinates ATP.

The protein belongs to the SELO family. Mg(2+) is required as a cofactor. Requires Mn(2+) as cofactor.

It catalyses the reaction L-seryl-[protein] + ATP = 3-O-(5'-adenylyl)-L-seryl-[protein] + diphosphate. The catalysed reaction is L-threonyl-[protein] + ATP = 3-O-(5'-adenylyl)-L-threonyl-[protein] + diphosphate. The enzyme catalyses L-tyrosyl-[protein] + ATP = O-(5'-adenylyl)-L-tyrosyl-[protein] + diphosphate. It carries out the reaction L-histidyl-[protein] + UTP = N(tele)-(5'-uridylyl)-L-histidyl-[protein] + diphosphate. It catalyses the reaction L-seryl-[protein] + UTP = O-(5'-uridylyl)-L-seryl-[protein] + diphosphate. The catalysed reaction is L-tyrosyl-[protein] + UTP = O-(5'-uridylyl)-L-tyrosyl-[protein] + diphosphate. Nucleotidyltransferase involved in the post-translational modification of proteins. It can catalyze the addition of adenosine monophosphate (AMP) or uridine monophosphate (UMP) to a protein, resulting in modifications known as AMPylation and UMPylation. This Vibrio vulnificus (strain YJ016) protein is Protein nucleotidyltransferase YdiU.